Consider the following 400-residue polypeptide: Cytoplasmic tRNA 2-thiolation protein 2 (400 aa).

Belongs to the CTU2/NCS2 family.

Its subcellular location is the cytoplasm. It functions in the pathway tRNA modification; 5-methoxycarbonylmethyl-2-thiouridine-tRNA biosynthesis. In terms of biological role, plays a central role in 2-thiolation of mcm(5)S(2)U at tRNA wobble positions of tRNA(Lys), tRNA(Glu) and tRNA(Gln). May act by forming a heterodimer with NCS6/CTU1 that ligates sulfur from thiocarboxylated URM1 onto the uridine of tRNAs at wobble position. This is Cytoplasmic tRNA 2-thiolation protein 2 from Drosophila virilis (Fruit fly).